The chain runs to 382 residues: Apolipoprotein A-IV (382 aa).

The first 20 residues, 1 to 20 (MFLKAVVLSLALVAVTGARA), serve as a signal peptide directing secretion. 13 consecutive repeat copies span residues 33 to 54 (DYFS…KSEL), 60 to 81 (TLFQ…KKLV), 82 to 103 (PFAT…EEIR), 115 to 136 (PHAT…QRLG), 137 to 158 (PFTG…RQLK), 159 to 180 (PYAE…ASVA), 181 to 202 (PYAD…GSLT), 203 to 224 (PYAE…RSLA), 225 to 246 (PYAQ…FQMK), 247 to 268 (KQAE…QKLV), 269 to 286 (PVAE…EGLQ), 287 to 308 (KSLL…LKVE), and 309 to 330 (PYGE…QKLG). The segment at 33 to 330 (DYFSQLGSNA…QVEDLRQKLG (298 aa)) is 13 X 22 AA approximate tandem repeats. Residues 361–382 (EASQGQSQALPAQEKAQAPLEG) are disordered.

This sequence belongs to the apolipoprotein A1/A4/E family. As to quaternary structure, homodimer. In terms of tissue distribution, secreted in plasma.

It localises to the secreted. May have a role in chylomicrons and VLDL secretion and catabolism. Required for efficient activation of lipoprotein lipase by ApoC-II; potent activator of LCAT. Apoa-IV is a major component of HDL and chylomicrons. The polypeptide is Apolipoprotein A-IV (APOA4) (Sus scrofa (Pig)).